Consider the following 538-residue polypeptide: [Pyruvate dehydrogenase [acetyl-transferring]]-phosphatase 1, mitochondrial (538 aa).

A mitochondrion-targeting transit peptide spans 1–71; it reads MPAPTQLFFP…WWQYTQGRRY (71 aa). A PPM-type phosphatase domain is found at 109–525; sequence VLGFDSNQLP…DDITIIVVQF (417 aa). Mn(2+) contacts are provided by Asp-144 and Gly-145. Lys-202 carries the N6-acetyllysine modification. Residues Asp-418 and Asp-516 each coordinate Mn(2+).

Belongs to the PP2C family. In terms of assembly, heterodimer of a catalytic (PDP1) and a regulatory (PDPR) subunit. Mn(2+) is required as a cofactor. It depends on Mg(2+) as a cofactor.

The protein resides in the mitochondrion. The enzyme catalyses O-phospho-L-seryl-[pyruvate dehydrogenase E1 alpha subunit] + H2O = L-seryl-[pyruvate dehydrogenase E1 alpha subunit] + phosphate. With respect to regulation, magnesium-dependent and calcium-stimulated. PDP1 activity strongly depends on its Ca(2+)-dependent binding to the lipoyl domain of E2 subunit of component of the pyruvate dehydrogenase complex. Functionally, mitochondrial enzyme that catalyzes the dephosphorylation and concomitant reactivation of the alpha subunit of the E1 component of the pyruvate dehydrogenase complex (PDC), thereby stimulating the conversion of pyruvate into acetyl-CoA. The protein is [Pyruvate dehydrogenase [acetyl-transferring]]-phosphatase 1, mitochondrial (PDP1) of Bos taurus (Bovine).